Here is a 63-residue protein sequence, read N- to C-terminus: Antimicrobial peptide 2 (63 aa).

Residues 1–27 (MAKVPIAFLKFVIVLILFIAMSGMIEA) form the signal peptide. 3 cysteine pairs are disulfide-bonded: Cys-28–Cys-45, Cys-35–Cys-49, and Cys-44–Cys-60.

It belongs to the AMP family. In terms of assembly, homodimer. As to expression, seed specific.

Its subcellular location is the secreted. In terms of biological role, possesses antifungal activity and is also active on two tested Gram-positive bacteria but is non-toxic for Gram-negative bacteria and cultured human cells. This is Antimicrobial peptide 2 (AMP2) from Mirabilis jalapa (Garden four-o'clock).